The sequence spans 453 residues: Pre-mRNA-splicing factor prp46 (453 aa).

Positions 62-71 are enriched in low complexity; that stretch reads EKQAKAAAAG. A disordered region spans residues 62–129; sequence EKQAKAAAAG…PSATRQQRPD (68 aa). 7 WD repeats span residues 142-181, 184-223, 226-265, 268-309, 311-350, 351-389, and 400-439; these read GHLG…LRLT, GHIS…VIRH, GHLS…NIHV, GHKG…GVLT, HKKG…QNFE, GHNA…KFQS, and DAEA…TPES. The segment at 432–453 is disordered; the sequence is DDEATPESHPVTWAPTLGRQRY.

The protein belongs to the WD repeat PRL1/PRL2 family. As to quaternary structure, associated with the spliceosome.

The protein resides in the cytoplasm. Its subcellular location is the nucleus. Involved in pre-mRNA splicing and required for cell cycle progression at G2/M. This Aspergillus fumigatus (strain ATCC MYA-4609 / CBS 101355 / FGSC A1100 / Af293) (Neosartorya fumigata) protein is Pre-mRNA-splicing factor prp46 (prp46).